The sequence spans 249 residues: Seipin homolog (249 aa).

The Cytoplasmic portion of the chain corresponds to 1-10; the sequence is MGYLVKLFKL. Residues 11 to 31 form a helical membrane-spanning segment; it reads VVWMLVIGLFSIPSLVSYVIF. At 32 to 212 the chain is on the lumenal side; it reads YDTVIPHSVI…GMRWFMYTHK (181 aa). The chain crosses the membrane as a helical span at residues 213–233; the sequence is VSAFLVFTSLFWFTGITSTII. Residues 234 to 249 are Cytoplasmic-facing; that stretch reads TYLIVSSTSETKATRR.

This sequence belongs to the seipin family.

It is found in the endoplasmic reticulum membrane. Functionally, involved in lipid metabolism and lipid droplet (LD) morphology, number, and size. Facilitates initiation of LD formation, and ensures that vectorial budding of LDs from the ER is directed towards the cytoplasm. The polypeptide is Seipin homolog (Schizosaccharomyces pombe (strain 972 / ATCC 24843) (Fission yeast)).